The primary structure comprises 260 residues: Ribosomal protein L11 methyltransferase (260 aa).

Residues T119, G140, D162, and N203 each contribute to the S-adenosyl-L-methionine site.

Belongs to the methyltransferase superfamily. PrmA family.

Its subcellular location is the cytoplasm. It carries out the reaction L-lysyl-[protein] + 3 S-adenosyl-L-methionine = N(6),N(6),N(6)-trimethyl-L-lysyl-[protein] + 3 S-adenosyl-L-homocysteine + 3 H(+). Functionally, methylates ribosomal protein L11. The protein is Ribosomal protein L11 methyltransferase of Thermosipho africanus (strain TCF52B).